We begin with the raw amino-acid sequence, 66 residues long: Large ribosomal subunit protein bL33c (66 aa).

Belongs to the bacterial ribosomal protein bL33 family.

The protein localises to the plastid. Its subcellular location is the chloroplast. The chain is Large ribosomal subunit protein bL33c from Welwitschia mirabilis (Tree tumbo).